A 187-amino-acid chain; its full sequence is Elongation factor P (187 aa).

It belongs to the elongation factor P family.

The protein localises to the cytoplasm. The protein operates within protein biosynthesis; polypeptide chain elongation. In terms of biological role, involved in peptide bond synthesis. Stimulates efficient translation and peptide-bond synthesis on native or reconstituted 70S ribosomes in vitro. Probably functions indirectly by altering the affinity of the ribosome for aminoacyl-tRNA, thus increasing their reactivity as acceptors for peptidyl transferase. The sequence is that of Elongation factor P from Thermodesulfovibrio yellowstonii (strain ATCC 51303 / DSM 11347 / YP87).